We begin with the raw amino-acid sequence, 435 residues long: Protein translocase subunit SecY (435 aa).

10 consecutive transmembrane segments (helical) span residues 19 to 39 (ILFT…TVPG), 68 to 88 (FSVF…VQLL), 116 to 136 (YIAL…FDTL), 147 to 167 (VQTY…VTWL), 179 to 199 (GVSM…IKGI), 216 to 236 (FIFV…TTFV), 269 to 289 (VIPV…FQVV), 311 to 331 (ISGM…YTFV), 372 to 392 (VGSL…DVFG), and 395 to 415 (DAVA…IEGM).

It belongs to the SecY/SEC61-alpha family. Component of the Sec protein translocase complex. Heterotrimer consisting of SecY, SecE and SecG subunits. The heterotrimers can form oligomers, although 1 heterotrimer is thought to be able to translocate proteins. Interacts with the ribosome. Interacts with SecDF, and other proteins may be involved. Interacts with SecA.

The protein resides in the cell membrane. The central subunit of the protein translocation channel SecYEG. Consists of two halves formed by TMs 1-5 and 6-10. These two domains form a lateral gate at the front which open onto the bilayer between TMs 2 and 7, and are clamped together by SecE at the back. The channel is closed by both a pore ring composed of hydrophobic SecY resides and a short helix (helix 2A) on the extracellular side of the membrane which forms a plug. The plug probably moves laterally to allow the channel to open. The ring and the pore may move independently. In Streptococcus sanguinis (strain SK36), this protein is Protein translocase subunit SecY.